A 586-amino-acid polypeptide reads, in one-letter code: Arginine--tRNA ligase (586 aa).

The 'HIGH' region signature appears at 131–141 (ANPTGPLHVGH).

The protein belongs to the class-I aminoacyl-tRNA synthetase family. As to quaternary structure, monomer.

It localises to the cytoplasm. It carries out the reaction tRNA(Arg) + L-arginine + ATP = L-arginyl-tRNA(Arg) + AMP + diphosphate. The polypeptide is Arginine--tRNA ligase (Nitrosomonas eutropha (strain DSM 101675 / C91 / Nm57)).